The chain runs to 603 residues: MHYKKYAELLKNGTYFSHIHSPTLLYPKGKVMYAQYGNSPLQGLNSQVTNLNLIRKVVAASAEMDSFKKLPNLQNNKLPLNNLKARLNTKAIYISNEEAQLTVSKIGTPNAIETDVPGTIKNAPSNTLLTHRSFKFFVNKIYAKPLISLKKTKETKPLLLGKTGTTLTQKGLNPFQSLFLNTKSSSPSTARSFGTKNIVNTLQIKKIVHKFENSYSKLTEINLITINLASANRIRQWAEKTLPNGKVVGEVINPETIHYKTLKPIKGGLFCERIFGPLKDHECACGKKFNIKNYLTKTVNNSSIQPIAESRQTQPNTQLSLNLQKRYFCRICDVEYTYSIIRRTQLGYIQLASPTTHVWFVKGIPSYISILLDMKKKHLQGITYNTETLTLENSFRGRQLLPVSPSSIFESWQKIMKKQYPEKYNLTNTMIKIKSTNTLPLRVSQPNSNTSYSYMPNIYIPEGEGEEKTKTKLKKTTPLNAIAQKGVKYKKPKTKKALYKQYLKNYYARKPKNSNQAEAVSFGVNKVQLPLTAFQQRNKVYFYKSEKRNWPVLTTVAKMQYIVSKKGWFKLIQYVIKSAESYGAATPTKMDGLQKMSLLTKQA.

Cys283, Cys285, Cys329, and Cys332 together coordinate Zn(2+).

The protein belongs to the RNA polymerase beta' chain family. RpoC1 subfamily. As to quaternary structure, in plastids the minimal PEP RNA polymerase catalytic core is composed of four subunits: alpha, beta, beta', and beta''. When a (nuclear-encoded) sigma factor is associated with the core the holoenzyme is formed, which can initiate transcription. Zn(2+) is required as a cofactor.

Its subcellular location is the plastid. The protein localises to the chloroplast. It catalyses the reaction RNA(n) + a ribonucleoside 5'-triphosphate = RNA(n+1) + diphosphate. DNA-dependent RNA polymerase catalyzes the transcription of DNA into RNA using the four ribonucleoside triphosphates as substrates. The protein is DNA-directed RNA polymerase subunit beta' N-terminal section (rpoC1A) of Chlamydomonas reinhardtii (Chlamydomonas smithii).